Consider the following 57-residue polypeptide: DNA-directed RNA polymerase subunit Rpo6 (57 aa).

This sequence belongs to the archaeal Rpo6/eukaryotic RPB6 RNA polymerase subunit family. In terms of assembly, part of the RNA polymerase complex.

The protein localises to the cytoplasm. The catalysed reaction is RNA(n) + a ribonucleoside 5'-triphosphate = RNA(n+1) + diphosphate. Its function is as follows. DNA-dependent RNA polymerase (RNAP) catalyzes the transcription of DNA into RNA using the four ribonucleoside triphosphates as substrates. The sequence is that of DNA-directed RNA polymerase subunit Rpo6 from Pyrococcus abyssi (strain GE5 / Orsay).